The sequence spans 236 residues: CBS domain-containing protein CBSX1, chloroplastic (236 aa).

The transit peptide at 1 to 53 (MDAVLYSVPLSFTPLRASSSPSSPYLLLPRFLSVQPCHKFTFSRSFPSKSRIP) directs the protein to the chloroplast. The interval 47 to 66 (PSKSRIPSASSAAGSTLMTN) is disordered. Residue Ser-54 is modified to N-acetylserine. CBS domains lie at 81–142 (MTKK…GRTE) and 175–231 (MTPA…IKRS).

It is found in the plastid. It localises to the chloroplast. This chain is CBS domain-containing protein CBSX1, chloroplastic (CBSX1), found in Arabidopsis thaliana (Mouse-ear cress).